A 709-amino-acid polypeptide reads, in one-letter code: Phosphoribosylformylglycinamidine synthase subunit PurL (709 aa).

Residue His36 is part of the active site. Positions 39 and 80 each coordinate ATP. Glu82 is a binding site for Mg(2+). Substrate is bound by residues 83–86 (SHNH) and Arg105. His84 acts as the Proton acceptor in catalysis. Mg(2+) is bound at residue Asp106. Gln226 lines the substrate pocket. Asp252 contributes to the Mg(2+) binding site. 294-296 (ETQ) is a substrate binding site. ATP-binding residues include Asp470 and Gly507. Ser510 is a substrate binding site.

The protein belongs to the FGAMS family. As to quaternary structure, monomer. Part of the FGAM synthase complex composed of 1 PurL, 1 PurQ and 2 PurS subunits.

The protein resides in the cytoplasm. It catalyses the reaction N(2)-formyl-N(1)-(5-phospho-beta-D-ribosyl)glycinamide + L-glutamine + ATP + H2O = 2-formamido-N(1)-(5-O-phospho-beta-D-ribosyl)acetamidine + L-glutamate + ADP + phosphate + H(+). Its pathway is purine metabolism; IMP biosynthesis via de novo pathway; 5-amino-1-(5-phospho-D-ribosyl)imidazole from N(2)-formyl-N(1)-(5-phospho-D-ribosyl)glycinamide: step 1/2. In terms of biological role, part of the phosphoribosylformylglycinamidine synthase complex involved in the purines biosynthetic pathway. Catalyzes the ATP-dependent conversion of formylglycinamide ribonucleotide (FGAR) and glutamine to yield formylglycinamidine ribonucleotide (FGAM) and glutamate. The FGAM synthase complex is composed of three subunits. PurQ produces an ammonia molecule by converting glutamine to glutamate. PurL transfers the ammonia molecule to FGAR to form FGAM in an ATP-dependent manner. PurS interacts with PurQ and PurL and is thought to assist in the transfer of the ammonia molecule from PurQ to PurL. The protein is Phosphoribosylformylglycinamidine synthase subunit PurL of Saccharolobus islandicus (strain M.16.4 / Kamchatka #3) (Sulfolobus islandicus).